Here is a 272-residue protein sequence, read N- to C-terminus: MTGSIWAGSIWAIVPAAGRGTRFGGPLPKQYLQAGGQPLMAYTLMALAAHPALAGIVVAIAPDDADWPGWTAVQSKPVLTCLGGATRAASVLAGVLALPESVRADDFVLVHDAARPNLALADLDRLLEIGRGDPVGAILAAPVRDTLKRAGDDGGIDGTEPRERLWRALTPQLFRRHQLIRGLTEASAAGVDVTDEAMAMERMGLRPLLVEGAEDNFKVTTPADLARFEFELARRGIAVDADALEAPAVNAQSNARNVATQLATVSYGNDAT.

This sequence belongs to the IspD/TarI cytidylyltransferase family. IspD subfamily.

The enzyme catalyses 2-C-methyl-D-erythritol 4-phosphate + CTP + H(+) = 4-CDP-2-C-methyl-D-erythritol + diphosphate. It participates in isoprenoid biosynthesis; isopentenyl diphosphate biosynthesis via DXP pathway; isopentenyl diphosphate from 1-deoxy-D-xylulose 5-phosphate: step 2/6. Functionally, catalyzes the formation of 4-diphosphocytidyl-2-C-methyl-D-erythritol from CTP and 2-C-methyl-D-erythritol 4-phosphate (MEP). This chain is 2-C-methyl-D-erythritol 4-phosphate cytidylyltransferase, found in Xanthomonas oryzae pv. oryzae (strain PXO99A).